A 291-amino-acid chain; its full sequence is 29 kDa ribonucleoprotein B, chloroplastic (291 aa).

One can recognise an RRM 1 domain in the interval 87–165; it reads LKLFVGNLPF…RAIRVNAGPA (79 aa). A disordered region spans residues 164 to 202; the sequence is PAPAKRENSSFGGGRGGNSSYGGGRDGNSSFGGARGGRS. Residues 166–206 form a linker (Gly-rich) region; sequence PAKRENSSFGGGRGGNSSYGGGRDGNSSFGGARGGRSVDSS. A compositionally biased stretch (gly residues) spans 174 to 189; the sequence is FGGGRGGNSSYGGGRD. The 79-residue stretch at 207–285 folds into the RRM 2 domain; the sequence is NRVYVGNLSW…RSIRVSAAEE (79 aa).

Its subcellular location is the plastid. The protein resides in the chloroplast. In terms of biological role, could be involved in splicing and/or processing of chloroplast RNA's. This is 29 kDa ribonucleoprotein B, chloroplastic from Nicotiana sylvestris (Wood tobacco).